A 504-amino-acid polypeptide reads, in one-letter code: 2-isopropylmalate synthase (504 aa).

The region spanning 6–267 (IIVFDTTLRD…YTDINFKEIY (262 aa)) is the Pyruvate carboxyltransferase domain. 4 residues coordinate Mn(2+): Asp-15, His-201, His-203, and Asn-237. The interval 391–504 (EIIALSSSEC…ALNSYISMKQ (114 aa)) is regulatory domain.

It belongs to the alpha-IPM synthase/homocitrate synthase family. LeuA type 1 subfamily. As to quaternary structure, homodimer. Mn(2+) serves as cofactor.

It localises to the cytoplasm. The enzyme catalyses 3-methyl-2-oxobutanoate + acetyl-CoA + H2O = (2S)-2-isopropylmalate + CoA + H(+). Its pathway is amino-acid biosynthesis; L-leucine biosynthesis; L-leucine from 3-methyl-2-oxobutanoate: step 1/4. Functionally, catalyzes the condensation of the acetyl group of acetyl-CoA with 3-methyl-2-oxobutanoate (2-ketoisovalerate) to form 3-carboxy-3-hydroxy-4-methylpentanoate (2-isopropylmalate). In Campylobacter hominis (strain ATCC BAA-381 / DSM 21671 / CCUG 45161 / LMG 19568 / NCTC 13146 / CH001A), this protein is 2-isopropylmalate synthase.